Here is a 242-residue protein sequence, read N- to C-terminus: MNLQMIGTGNAFAKKYFNNNALIEQDGFKLLIDCGITAPLALYELGIGMEELDAVLVTHTHGDHVGGLEEYGFQMKFKHGRRPVLLLPEALVDPLWQNTLSGGMTQEGLEKLEDAFDVRALRVGDVQELAPNLCVELVPTSHIAGKKSYSLILNRDVFYSADMTFEPELLTTLVRDRGIRRILHEVQLEGPGAVHTTLDELLSLPEEMQSIIKLMHYADNKEQFVGRTGKMEFLEQGLVYPI.

The tract at residues 17–216 (FNNNALIEQD…EMQSIIKLMH (200 aa)) is beta-lactamase-like. His-59, His-61, Asp-63, His-64, His-142, Asp-162, and His-216 together coordinate Zn(2+).

Belongs to the anti-Pycsar protein Apyc1 family. In terms of assembly, homodimer. Zn(2+) serves as cofactor.

The enzyme catalyses 3',5'-cyclic CMP + H2O = CMP + H(+). The catalysed reaction is 3',5'-cyclic UMP + H2O = UMP + H(+). In terms of biological role, counteracts the endogenous Pycsar antiviral defense system. Phosphodiesterase that enables metal-dependent hydrolysis of host cyclic nucleotide Pycsar defense signals such as cCMP and cUMP. This is Anti-Pycsar protein Apyc1 from Saccharibacillus brassicae.